Here is a 592-residue protein sequence, read N- to C-terminus: Bifunctional purine biosynthesis protein ATIC (592 aa).

Met1 carries the post-translational modification N-acetylmethionine. In terms of domain architecture, MGS-like spans 1–146; that stretch reads MASSQLALFS…KNHARVTVVC (146 aa). The segment at 1–198 is IMP cyclohydrolase; that stretch reads MASSQLALFS…ISDYFRRQYS (198 aa). IMP is bound by residues 12 to 14, 34 to 37, 64 to 67, 101 to 102, and 125 to 126; these read SDK, SGGT, RVKT, CN, and DI. The Proton donor/acceptor; for FAICAR cyclization activity role is filled by Lys137. N6-acetyllysine is present on Lys199. Residues 199-592 are AICAR formyltransferase; it reads KGISQMPLRY…AHTDLRLFHH (394 aa). Residues 207–208, His267, Gly316, Asp339, Asn431, and Arg451 each bind 5-amino-1-(5-phospho-beta-D-ribosyl)imidazole-4-carboxamide; that span reads RY. His267 (proton acceptor; for AICAR formyltransferase activity) is an active-site residue. Ile452 serves as a coordination point for (6R)-10-formyltetrahydrofolate. Phe541 contributes to the 5-amino-1-(5-phospho-beta-D-ribosyl)imidazole-4-carboxamide binding site. (6R)-10-formyltetrahydrofolate-binding positions include Asp546 and 565-566; that span reads ST. A 5-amino-1-(5-phospho-beta-D-ribosyl)imidazole-4-carboxamide-binding site is contributed by Arg588.

Belongs to the PurH family. As to quaternary structure, homodimer. Associates with internalized INSR complexes on Golgi/endosomal membranes. Interacts with INSR; ATIC together with PRKAA2/AMPK2 and HACD3/PTPLAD1 is proposed to be part of a signaling network regulating INSR autophosphorylation and endocytosis. Expressed in liver.

It is found in the cytoplasm. It localises to the cytosol. The enzyme catalyses (6R)-10-formyltetrahydrofolate + 5-amino-1-(5-phospho-beta-D-ribosyl)imidazole-4-carboxamide = 5-formamido-1-(5-phospho-D-ribosyl)imidazole-4-carboxamide + (6S)-5,6,7,8-tetrahydrofolate. It carries out the reaction 10-formyldihydrofolate + 5-amino-1-(5-phospho-beta-D-ribosyl)imidazole-4-carboxamide = 5-formamido-1-(5-phospho-D-ribosyl)imidazole-4-carboxamide + 7,8-dihydrofolate. It catalyses the reaction IMP + H2O = 5-formamido-1-(5-phospho-D-ribosyl)imidazole-4-carboxamide. Its pathway is purine metabolism; IMP biosynthesis via de novo pathway; 5-formamido-1-(5-phospho-D-ribosyl)imidazole-4-carboxamide from 5-amino-1-(5-phospho-D-ribosyl)imidazole-4-carboxamide (10-formyl THF route): step 1/1. The protein operates within purine metabolism; IMP biosynthesis via de novo pathway; IMP from 5-formamido-1-(5-phospho-D-ribosyl)imidazole-4-carboxamide: step 1/1. With respect to regulation, AMP and XMP inhibit AICAR formyltransferase activity. Bifunctional enzyme that catalyzes the last two steps of purine biosynthesis. Acts as a transformylase that incorporates a formyl group to the AMP analog AICAR (5-amino-1-(5-phospho-beta-D-ribosyl)imidazole-4-carboxamide) to produce the intermediate formyl-AICAR (FAICAR). Can use both 10-formyldihydrofolate and 10-formyltetrahydrofolate as the formyl donor in this reaction. Also catalyzes the cyclization of FAICAR to inosine monophosphate (IMP). Promotes insulin receptor/INSR autophosphorylation and is involved in INSR internalization. The protein is Bifunctional purine biosynthesis protein ATIC (Atic) of Rattus norvegicus (Rat).